The following is a 418-amino-acid chain: Tyrosine--tRNA ligase (418 aa).

An L-tyrosine-binding site is contributed by Tyr34. Positions 39-48 (PTADSLHLGH) match the 'HIGH' region motif. Positions 169 and 173 each coordinate L-tyrosine. The 'KMSKS' region signature appears at 229–233 (KFGKS). Lys232 serves as a coordination point for ATP. The S4 RNA-binding domain maps to 352–418 (LNLVDMLVTA…GKKKYAVLTY (67 aa)).

The protein belongs to the class-I aminoacyl-tRNA synthetase family. TyrS type 1 subfamily. As to quaternary structure, homodimer.

It is found in the cytoplasm. It catalyses the reaction tRNA(Tyr) + L-tyrosine + ATP = L-tyrosyl-tRNA(Tyr) + AMP + diphosphate + H(+). In terms of biological role, catalyzes the attachment of tyrosine to tRNA(Tyr) in a two-step reaction: tyrosine is first activated by ATP to form Tyr-AMP and then transferred to the acceptor end of tRNA(Tyr). In Streptococcus pyogenes serotype M3 (strain SSI-1), this protein is Tyrosine--tRNA ligase.